Here is a 113-residue protein sequence, read N- to C-terminus: Large ribosomal subunit protein bL19 (113 aa).

It belongs to the bacterial ribosomal protein bL19 family.

Functionally, this protein is located at the 30S-50S ribosomal subunit interface and may play a role in the structure and function of the aminoacyl-tRNA binding site. The polypeptide is Large ribosomal subunit protein bL19 (Corynebacterium urealyticum (strain ATCC 43042 / DSM 7109)).